Consider the following 421-residue polypeptide: C2H2 type master regulator of conidiophore development brlA (421 aa).

Positions threonine 228 to threonine 242 are enriched in polar residues. The tract at residues threonine 228 to aspartate 247 is disordered. 2 C2H2-type zinc fingers span residues phenylalanine 309–histidine 333 and histidine 339–histidine 364. Residues threonine 361–arginine 370 are compositionally biased toward basic residues. Residues threonine 361–aspartate 421 are disordered.

The protein localises to the nucleus. BrlA, abaA and wetA are pivotal regulators of conidiophore development and conidium maturation. They act individually and together to regulate their own expression and that of numerous other sporulation-specific genes. Binds promoters of target genes at brlA response elements (BREs) containing the conserved sequence 5'-(C/A)(A/G)AGGG(G/A)-3'. In Aspergillus parasiticus (strain ATCC 56775 / NRRL 5862 / SRRC 143 / SU-1), this protein is C2H2 type master regulator of conidiophore development brlA.